A 788-amino-acid polypeptide reads, in one-letter code: Calpastatin (788 aa).

A compositionally biased stretch (pro residues) spans 1-11; the sequence is MSQPGPKPAAS. Disordered stretches follow at residues 1–262, 289–493, and 514–580; these read MSQP…TGPV, LLEK…MCSI, and TLAG…SQEQ. Phosphoserine is present on Ser-11. Residues 12–21 are compositionally biased toward low complexity; the sequence is PRPSRGAAAR. Residues 38–49 are compositionally biased toward basic and acidic residues; sequence PGEKKGSDEKKA. Positions 65-87 are enriched in low complexity; that stretch reads AATATKVTASSAATSKSPSMSTT. The segment covering 99–119 has biased composition (basic and acidic residues); that stretch reads EGPDQKRPREQAVKTESKKPQ. Lys-112 is covalently cross-linked (Glycyl lysine isopeptide (Lys-Gly) (interchain with G-Cter in SUMO2)). Lys-129 bears the N6-acetyllysine mark. A Phosphoserine modification is found at Ser-165. At Thr-216 the chain carries Phosphothreonine. Residue Ser-219 is modified to Phosphoserine. A compositionally biased stretch (basic and acidic residues) spans 246-256; it reads GGHEDTNRDDP. The stretch at 251-303 is one Inhibitory domain 1 repeat; that stretch reads TNRDDPPYTGPVVLDPMYSTYLEALGIKEGTIPPEYRKLLEKNEGITQPLPDS. Residues Ser-303 and Ser-324 each carry the phosphoserine modification. Composition is skewed to polar residues over residues 318–328 and 369–380; these read SDFTCSSPTGK and QALQALSDSLGT. One copy of the Inhibitory domain 2 repeat lies at 384–436; sequence DPPSHVSQAEQVKEAKAKEERQEKCGEDEDTVPAEYRLKPAKDKDGKPLLPEP. Composition is skewed to basic and acidic residues over residues 394–408 and 419–430; these read QVKE…QEKC and YRLKPAKDKDGK. A compositionally biased stretch (low complexity) spans 441 to 453; it reads KSLSESELIGELS. Ser-444, Ser-446, and Ser-453 each carry phosphoserine. At Thr-479 the chain carries Phosphothreonine. Residue Ser-518 is modified to Phosphoserine. Residues 522–570 show a composition bias toward basic and acidic residues; that stretch reads READPEHEKTVEDKVKEKAKEEEHEKLGEKEETVPPDYRLEEVKDKDGK. An Inhibitory domain 3 repeat occupies 524 to 577; sequence ADPEHEKTVEDKVKEKAKEEEHEKLGEKEETVPPDYRLEEVKDKDGKPLLPKES. Phosphoserine is present on residues Ser-594, Ser-605, Ser-653, and Ser-655. The tract at residues 620–788 is disordered; it reads VVSQTPAPST…PKAKEDARHS (169 aa). Residues 661 to 714 form an Inhibitory domain 4 repeat; the sequence is PDPDENKPLDDKVKEKIKPEHSEKLGERDDTIPPEYRHLLDNDGKDKPEKPPTK. Composition is skewed to basic and acidic residues over residues 661-726 and 759-788; these read PDPD…RDPI and ASKD…ARHS.

The protein belongs to the protease inhibitor I27 (calpastatin) family. Isoform 2 is the major form in all tissues examined. Isoform 1 accounts for 5-10% in tissues such as skeletal muscle, liver and brain, and 30% in myoblasts. Isoforms 4 and 5 are testis-specific. Isoform 6 is highly expressed in heart and skeletal muscle with lower levels in liver, brain and testis. Isoform 7 is expressed at high levels in liver.

Functionally, specific inhibition of calpain (calcium-dependent cysteine protease). Plays a key role in postmortem tenderization of meat and have been proposed to be involved in muscle protein degradation in living tissue. The protein is Calpastatin (Cast) of Mus musculus (Mouse).